A 161-amino-acid polypeptide reads, in one-letter code: Transcriptional repressor NrdR (161 aa).

The segment at 3–34 is a zinc-finger region; it reads CPSCQHTDSRVLESRAADSGKSVRRRRECLNC. Positions 49-139 constitute an ATP-cone domain; it reads ITVVKRSGTR…VYGKFSGISD (91 aa).

Belongs to the NrdR family. Requires Zn(2+) as cofactor.

Negatively regulates transcription of bacterial ribonucleotide reductase nrd genes and operons by binding to NrdR-boxes. The polypeptide is Transcriptional repressor NrdR (Synechococcus sp. (strain RCC307)).